We begin with the raw amino-acid sequence, 326 residues long: Beta-ketoacyl-[acyl-carrier-protein] synthase III (326 aa).

Residues Cys-120 and His-253 contribute to the active site. Positions 254–258 are ACP-binding; it reads QANIR. The active site involves Asn-283.

This sequence belongs to the thiolase-like superfamily. FabH family. In terms of assembly, homodimer.

The protein resides in the cytoplasm. The catalysed reaction is malonyl-[ACP] + acetyl-CoA + H(+) = 3-oxobutanoyl-[ACP] + CO2 + CoA. Its pathway is lipid metabolism; fatty acid biosynthesis. Catalyzes the condensation reaction of fatty acid synthesis by the addition to an acyl acceptor of two carbons from malonyl-ACP. Catalyzes the first condensation reaction which initiates fatty acid synthesis and may therefore play a role in governing the total rate of fatty acid production. Possesses both acetoacetyl-ACP synthase and acetyl transacylase activities. Its substrate specificity determines the biosynthesis of branched-chain and/or straight-chain of fatty acids. The sequence is that of Beta-ketoacyl-[acyl-carrier-protein] synthase III from Cupriavidus pinatubonensis (strain JMP 134 / LMG 1197) (Cupriavidus necator (strain JMP 134)).